The chain runs to 256 residues: 5-oxoprolinase subunit A 1 (256 aa).

Belongs to the LamB/PxpA family. In terms of assembly, forms a complex composed of PxpA, PxpB and PxpC.

It carries out the reaction 5-oxo-L-proline + ATP + 2 H2O = L-glutamate + ADP + phosphate + H(+). Catalyzes the cleavage of 5-oxoproline to form L-glutamate coupled to the hydrolysis of ATP to ADP and inorganic phosphate. This is 5-oxoprolinase subunit A 1 from Pseudomonas syringae pv. tomato (strain ATCC BAA-871 / DC3000).